The sequence spans 236 residues: Purine nucleoside phosphorylase DeoD-type (236 aa).

His4 provides a ligand contact to a purine D-ribonucleoside. Phosphate is bound by residues Gly20, Arg24, Arg43, and Arg87–Thr90. Residues Glu179–Glu181 and Ser203–Asp204 contribute to the a purine D-ribonucleoside site. Asp204 functions as the Proton donor in the catalytic mechanism.

This sequence belongs to the PNP/UDP phosphorylase family. Homohexamer; trimer of homodimers.

The enzyme catalyses a purine D-ribonucleoside + phosphate = a purine nucleobase + alpha-D-ribose 1-phosphate. It carries out the reaction a purine 2'-deoxy-D-ribonucleoside + phosphate = a purine nucleobase + 2-deoxy-alpha-D-ribose 1-phosphate. Catalyzes the reversible phosphorolytic breakdown of the N-glycosidic bond in the beta-(deoxy)ribonucleoside molecules, with the formation of the corresponding free purine bases and pentose-1-phosphate. The protein is Purine nucleoside phosphorylase DeoD-type of Streptococcus pneumoniae (strain CGSP14).